A 1200-amino-acid polypeptide reads, in one-letter code: uncharacterized protein (1200 aa).

5 disordered regions span residues 282-302, 323-372, 392-491, 510-568, and 1056-1200; these read SQES…GCTS, LSEA…PQGS, SQEP…KASL, RAKS…RIGA, and SCPE…LASL. Over residues 420–435 the composition is skewed to low complexity; that stretch reads ASSPRLSPASPAAAAS. Residues 437 to 448 show a composition bias toward basic and acidic residues; the sequence is TKIEVKTKERNG. Positions 518-527 are enriched in polar residues; the sequence is GTTQTKTSGP. The segment covering 1137–1153 has biased composition (basic and acidic residues); it reads EDGKGSHKLPDPAREHL. Positions 1160-1171 are enriched in low complexity; that stretch reads RQQPPRQSQVPR. A compositionally biased stretch (polar residues) spans 1175–1200; sequence GSFSSEGTDSQTSLEDSPQTSPLASL.

This is an uncharacterized protein from Homo sapiens (Human).